The primary structure comprises 142 residues: Hemoglobin subunit alpha-4 (142 aa).

A Globin domain is found at 2–142 (TLTDSDKAAI…VATVLTSKYR (141 aa)). Histidine 59 is an O2 binding site. Histidine 88 provides a ligand contact to heme b.

The protein belongs to the globin family. Heterotetramer of two alpha chains and two beta chains. As to expression, red blood cells.

Its function is as follows. This is a larval (tadpole) alpha-globin. The protein is Hemoglobin subunit alpha-4 (hba4) of Xenopus laevis (African clawed frog).